A 199-amino-acid chain; its full sequence is Recombination protein RecR (199 aa).

Residues 57 to 72 form a C4-type zinc finger; that stretch reads CRSCRTFTEESHCPIC. In terms of domain architecture, Toprim spans 81–176; the sequence is EQICVVETPA…SVSRIAHGVP (96 aa).

It belongs to the RecR family.

Its function is as follows. May play a role in DNA repair. It seems to be involved in an RecBC-independent recombinational process of DNA repair. It may act with RecF and RecO. This Shewanella sediminis (strain HAW-EB3) protein is Recombination protein RecR.